The sequence spans 420 residues: UDP-N-acetylglucosamine 1-carboxyvinyltransferase (420 aa).

Residue 22–23 (KN) coordinates phosphoenolpyruvate. Arginine 94 contacts UDP-N-acetyl-alpha-D-glucosamine. The active-site Proton donor is cysteine 118. Cysteine 118 carries the post-translational modification 2-(S-cysteinyl)pyruvic acid O-phosphothioketal. Residues aspartate 307 and isoleucine 329 each contribute to the UDP-N-acetyl-alpha-D-glucosamine site.

It belongs to the EPSP synthase family. MurA subfamily.

Its subcellular location is the cytoplasm. The catalysed reaction is phosphoenolpyruvate + UDP-N-acetyl-alpha-D-glucosamine = UDP-N-acetyl-3-O-(1-carboxyvinyl)-alpha-D-glucosamine + phosphate. Its pathway is cell wall biogenesis; peptidoglycan biosynthesis. Functionally, cell wall formation. Adds enolpyruvyl to UDP-N-acetylglucosamine. The polypeptide is UDP-N-acetylglucosamine 1-carboxyvinyltransferase (Gluconacetobacter diazotrophicus (strain ATCC 49037 / DSM 5601 / CCUG 37298 / CIP 103539 / LMG 7603 / PAl5)).